The primary structure comprises 477 residues: Protoporphyrinogen oxidase (477 aa).

FAD contacts are provided by residues 9 to 14 (GGGISG), tryptophan 42, 57 to 60 (GPRG), valine 257, alanine 449, and 454 to 456 (VAV).

Belongs to the protoporphyrinogen/coproporphyrinogen oxidase family. Protoporphyrinogen oxidase subfamily. In terms of assembly, monomer. Homodimer. It depends on FAD as a cofactor.

Its subcellular location is the mitochondrion inner membrane. It catalyses the reaction protoporphyrinogen IX + 3 O2 = protoporphyrin IX + 3 H2O2. It participates in porphyrin-containing compound metabolism; protoporphyrin-IX biosynthesis; protoporphyrin-IX from protoporphyrinogen-IX: step 1/1. With respect to regulation, inhibited by acifluorfen. Catalyzes the 6-electron oxidation of protoporphyrinogen-IX to form protoporphyrin-IX. The polypeptide is Protoporphyrinogen oxidase (Ppox) (Mus musculus (Mouse)).